A 332-amino-acid chain; its full sequence is HPr kinase/phosphorylase (332 aa).

Catalysis depends on residues H153 and K174. Residue 168–175 (GKSGLGKS) participates in ATP binding. S175 is a Mg(2+) binding site. The active-site Proton acceptor; for phosphorylation activity. Proton donor; for dephosphorylation activity is D192. The important for the catalytic mechanism of both phosphorylation and dephosphorylation stretch occupies residues 217–226 (MEIRGLGVVD). E218 lines the Mg(2+) pocket. The active site involves R259. The important for the catalytic mechanism of dephosphorylation stretch occupies residues 280-285 (PIFPGK).

The protein belongs to the HPrK/P family. Homohexamer. It depends on Mg(2+) as a cofactor.

It catalyses the reaction [HPr protein]-L-serine + ATP = [HPr protein]-O-phospho-L-serine + ADP + H(+). The enzyme catalyses [HPr protein]-O-phospho-L-serine + phosphate + H(+) = [HPr protein]-L-serine + diphosphate. Its function is as follows. Catalyzes the ATP- as well as the pyrophosphate-dependent phosphorylation of a specific serine residue in HPr, a phosphocarrier protein of the phosphoenolpyruvate-dependent sugar phosphotransferase system (PTS). HprK/P also catalyzes the pyrophosphate-producing, inorganic phosphate-dependent dephosphorylation (phosphorolysis) of seryl-phosphorylated HPr (P-Ser-HPr). This Chlorobium phaeovibrioides (strain DSM 265 / 1930) (Prosthecochloris vibrioformis (strain DSM 265)) protein is HPr kinase/phosphorylase.